The primary structure comprises 501 residues: Trans-cinnamate 4-monooxygenase (501 aa).

A helical membrane pass occupies residues Leu3–Val23. (E)-cinnamate contacts are provided by residues Arg213–Gln218 and Ala302. Position 443 (Cys443) interacts with heme.

It belongs to the cytochrome P450 family. Heme serves as cofactor.

It is found in the membrane. It carries out the reaction (E)-cinnamate + reduced [NADPH--hemoprotein reductase] + O2 = (E)-4-coumarate + oxidized [NADPH--hemoprotein reductase] + H2O + H(+). Its pathway is phenylpropanoid metabolism; trans-4-coumarate biosynthesis; trans-4-coumarate from trans-cinnamate: step 1/1. Catalyzes the first oxidative step of the phenylpropanoid pathway in higher plants by transforming trans-cinnamate into p-coumarate. The compounds formed by this pathway are essential components for lignification, pollination, and defense against ultraviolet light, predators and pathogens. Can also use 2-naphthoic acid as substrate. The chain is Trans-cinnamate 4-monooxygenase from Sorghum bicolor (Sorghum).